The following is a 456-amino-acid chain: Exodeoxyribonuclease 7 large subunit (456 aa).

It belongs to the XseA family. As to quaternary structure, heterooligomer composed of large and small subunits.

The protein localises to the cytoplasm. It catalyses the reaction Exonucleolytic cleavage in either 5'- to 3'- or 3'- to 5'-direction to yield nucleoside 5'-phosphates.. In terms of biological role, bidirectionally degrades single-stranded DNA into large acid-insoluble oligonucleotides, which are then degraded further into small acid-soluble oligonucleotides. The protein is Exodeoxyribonuclease 7 large subunit of Shigella boydii serotype 18 (strain CDC 3083-94 / BS512).